The primary structure comprises 138 residues: Translation initiation factor 2 subunit beta (138 aa).

The protein belongs to the eIF-2-beta/eIF-5 family. In terms of assembly, heterotrimer composed of an alpha, a beta and a gamma chain.

EIF-2 functions in the early steps of protein synthesis by forming a ternary complex with GTP and initiator tRNA. In Methanococcus maripaludis (strain C6 / ATCC BAA-1332), this protein is Translation initiation factor 2 subunit beta.